Consider the following 134-residue polypeptide: Small ribosomal subunit protein bS6 (134 aa).

This sequence belongs to the bacterial ribosomal protein bS6 family.

Binds together with bS18 to 16S ribosomal RNA. This chain is Small ribosomal subunit protein bS6, found in Chlorobium phaeobacteroides (strain BS1).